The sequence spans 586 residues: Scavenger receptor cysteine-rich domain-containing group B protein (586 aa).

A disordered region spans residues 1–33 (MGPSERPSIGWTPKEAEMQIGPQPDGWSRGWKP). The N-terminal stretch at 1–58 (MGPSERPSIGWTPKEAEMQIGPQPDGWSRGWKPGDRGAVPLPLSPALSFLLLFPLASA) is a signal peptide. 4 consecutive SRCR domains span residues 69–169 (LRLV…VLCD), 200–300 (VRLV…VLCA), 355–455 (LRLV…ALCA), and 484–584 (LRLA…VLCQ). Intrachain disulfides connect Cys94–Cys158, Cys107–Cys168, Cys138–Cys148, Cys225–Cys289, Cys238–Cys299, Cys269–Cys279, Cys380–Cys444, Cys393–Cys454, Cys424–Cys434, Cys509–Cys573, Cys522–Cys583, and Cys553–Cys563.

It is found in the secreted. The protein is Scavenger receptor cysteine-rich domain-containing group B protein of Mus musculus (Mouse).